The primary structure comprises 319 residues: Cell division protein FtsQ (319 aa).

Residues 1–53 (MDSREDMVPDVLLEAPNPRRRQSADTSTERPTRPARREQGYARVTPRGERMGN) are disordered. Topologically, residues 1–70 (MDSREDMVPD…PDFFAWFDPR (70 aa)) are cytoplasmic. Over residues 27-52 (STERPTRPARREQGYARVTPRGERMG) the composition is skewed to basic and acidic residues. A helical transmembrane segment spans residues 71-87 (WLWVPLMVCLAVGGYWA). The Periplasmic portion of the chain corresponds to 88–319 (YEPLEKLLER…NATRNAPTHP (232 aa)). The 70-residue stretch at 97 to 166 (RPFKSVVVEG…DTLVVKIAEQ (70 aa)) folds into the POTRA domain.

The protein belongs to the FtsQ/DivIB family. FtsQ subfamily. In terms of assembly, part of a complex composed of FtsB, FtsL and FtsQ.

It localises to the cell inner membrane. In terms of biological role, essential cell division protein. May link together the upstream cell division proteins, which are predominantly cytoplasmic, with the downstream cell division proteins, which are predominantly periplasmic. May control correct divisome assembly. The chain is Cell division protein FtsQ from Cellvibrio japonicus (strain Ueda107) (Pseudomonas fluorescens subsp. cellulosa).